The primary structure comprises 388 residues: Protein-glutamate methylesterase/protein-glutamine glutaminase (388 aa).

Residues 20-138 (RVMVVDDSVV…ESAGAEVFRH (119 aa)) enclose the Response regulatory domain. The residue at position 71 (D71) is a 4-aspartylphosphate. The CheB-type methylesterase domain occupies 193 to 386 (PTAPRVLLIG…PKLVRLFSGD (194 aa)). Catalysis depends on residues S204, H232, and D328.

It belongs to the CheB family. Post-translationally, phosphorylated by CheA. Phosphorylation of the N-terminal regulatory domain activates the methylesterase activity.

The protein resides in the cytoplasm. The enzyme catalyses [protein]-L-glutamate 5-O-methyl ester + H2O = L-glutamyl-[protein] + methanol + H(+). It carries out the reaction L-glutaminyl-[protein] + H2O = L-glutamyl-[protein] + NH4(+). Its function is as follows. Involved in chemotaxis. Part of a chemotaxis signal transduction system that modulates chemotaxis in response to various stimuli. Catalyzes the demethylation of specific methylglutamate residues introduced into the chemoreceptors (methyl-accepting chemotaxis proteins or MCP) by CheR. Also mediates the irreversible deamidation of specific glutamine residues to glutamic acid. The polypeptide is Protein-glutamate methylesterase/protein-glutamine glutaminase (Rhodopseudomonas palustris (strain HaA2)).